We begin with the raw amino-acid sequence, 454 residues long: tRNA modification GTPase MnmE (454 aa).

Arg-23, Glu-80, and Lys-120 together coordinate (6S)-5-formyl-5,6,7,8-tetrahydrofolate. The 162-residue stretch at 216–377 (GMKVVIAGKP…LRTHLKQSMG (162 aa)) folds into the TrmE-type G domain. Asn-226 contributes to the K(+) binding site. Residues 226-231 (NAGKSS), 245-251 (TAIAGTT), 270-273 (DTAG), and 335-338 (NKAD) contribute to the GTP site. Mg(2+) is bound at residue Ser-230. K(+)-binding residues include Thr-245, Ile-247, and Thr-250. Thr-251 provides a ligand contact to Mg(2+). Lys-454 contributes to the (6S)-5-formyl-5,6,7,8-tetrahydrofolate binding site.

The protein belongs to the TRAFAC class TrmE-Era-EngA-EngB-Septin-like GTPase superfamily. TrmE GTPase family. As to quaternary structure, homodimer. Heterotetramer of two MnmE and two MnmG subunits. The cofactor is K(+).

It is found in the cytoplasm. In terms of biological role, exhibits a very high intrinsic GTPase hydrolysis rate. Involved in the addition of a carboxymethylaminomethyl (cmnm) group at the wobble position (U34) of certain tRNAs, forming tRNA-cmnm(5)s(2)U34. In Sodalis glossinidius (strain morsitans), this protein is tRNA modification GTPase MnmE.